The chain runs to 2635 residues: Large tegument protein deneddylase (2635 aa).

The segment at 1-233 (MAAQPLYMEG…LHGPRMDISR (233 aa)) is deubiquitination activity. Residues 9 to 223 (EGMASTHQAN…NHYRTIVFEE (215 aa)) form the Peptidase C76 domain. Catalysis depends on residues C29, D159, and H161. Disordered stretches follow at residues 243 to 497 (ITSP…DRYA), 2238 to 2269 (PLTITPNKPTGTPHVSPEADPITERKRGQQPK), 2357 to 2438 (RTAL…KRAA), and 2500 to 2533 (KAGWDTAPDIPLPHSSPESSPPTSPQPIRVDDKS). Low complexity predominate over residues 245-255 (SPSVSPAPSEA). Basic and acidic residues-rich tracts occupy residues 256-270 (PLRRDSTQSQDETRP) and 282-295 (PTDRPRPPHQDRPP). The interval 316–325 (KTGRGGNEGR) is interaction with inner tegument protein. Residues 330–346 (PPDEHQPPHITAEHMDQ) are compositionally biased toward basic and acidic residues. The span at 448–461 (DDPLTPLYPLTDTP) shows a compositional bias: low complexity. The segment covering 2379-2402 (TLTFRLPPTAPTPATAALETKTTP) has biased composition (low complexity). A compositionally biased stretch (basic and acidic residues) spans 2425–2437 (HARDTSPPAEKRA).

The protein belongs to the herpesviridae large tegument protein family. In terms of assembly, interacts with host CUL1 and CUL4A; these interactions inhibit the E3 ligase activity of cullins. Interacts with inner tegument protein. Interacts with capsid vertex specific component CVC2. Interacts with the major capsid protein/MCP.

Its subcellular location is the virion tegument. The protein resides in the host cytoplasm. The protein localises to the host nucleus. The catalysed reaction is Thiol-dependent hydrolysis of ester, thioester, amide, peptide and isopeptide bonds formed by the C-terminal Gly of ubiquitin (a 76-residue protein attached to proteins as an intracellular targeting signal).. Its function is as follows. Large tegument protein that plays multiple roles in the viral cycle. During viral entry, remains associated with the capsid while most of the tegument is detached and participates in the capsid transport toward the host nucleus. Plays a role in the routing of the capsid at the nuclear pore complex and subsequent uncoating. Within the host nucleus, acts as a deneddylase and promotes the degradation of nuclear CRLs (cullin-RING ubiquitin ligases) and thereby stabilizes nuclear CRL substrates, while cytoplasmic CRLs remain unaffected. These modifications prevent host cell cycle S-phase progression and create a favorable environment allowing efficient viral genome replication. Participates later in the secondary envelopment of capsids. Indeed, plays a linker role for the association of the outer viral tegument to the capsids together with the inner tegument protein. The polypeptide is Large tegument protein deneddylase (Homo sapiens (Human)).